The sequence spans 38 residues: Photosystem II reaction center protein L (38 aa).

A helical transmembrane segment spans residues 17 to 37 (SLYWGLLLIFVLAVLFSNYFF).

It belongs to the PsbL family. As to quaternary structure, PSII is composed of 1 copy each of membrane proteins PsbA, PsbB, PsbC, PsbD, PsbE, PsbF, PsbH, PsbI, PsbJ, PsbK, PsbL, PsbM, PsbT, PsbX, PsbY, PsbZ, Psb30/Ycf12, at least 3 peripheral proteins of the oxygen-evolving complex and a large number of cofactors. It forms dimeric complexes.

It is found in the plastid. The protein localises to the chloroplast thylakoid membrane. Functionally, one of the components of the core complex of photosystem II (PSII). PSII is a light-driven water:plastoquinone oxidoreductase that uses light energy to abstract electrons from H(2)O, generating O(2) and a proton gradient subsequently used for ATP formation. It consists of a core antenna complex that captures photons, and an electron transfer chain that converts photonic excitation into a charge separation. This subunit is found at the monomer-monomer interface and is required for correct PSII assembly and/or dimerization. The chain is Photosystem II reaction center protein L from Ananas comosus (Pineapple).